The following is a 400-amino-acid chain: tRNA(Met) cytidine acetate ligase (400 aa).

Residues 7-20, Gly101, Asn162, and Arg187 each bind ATP; that span reads IVEYNPFHNGHQYH.

The protein belongs to the TmcAL family.

It is found in the cytoplasm. The catalysed reaction is cytidine(34) in elongator tRNA(Met) + acetate + ATP = N(4)-acetylcytidine(34) in elongator tRNA(Met) + AMP + diphosphate. Catalyzes the formation of N(4)-acetylcytidine (ac(4)C) at the wobble position of elongator tRNA(Met), using acetate and ATP as substrates. First activates an acetate ion to form acetyladenylate (Ac-AMP) and then transfers the acetyl group to tRNA to form ac(4)C34. The sequence is that of tRNA(Met) cytidine acetate ligase from Oceanobacillus iheyensis (strain DSM 14371 / CIP 107618 / JCM 11309 / KCTC 3954 / HTE831).